The primary structure comprises 81 residues: ATP synthase subunit c, chloroplastic (81 aa).

A run of 2 helical transmembrane segments spans residues 4 to 24 and 57 to 77; these read VISAASVIAAGLAVGLASIGP and LAFMEALTIYGLVVALALLFA.

This sequence belongs to the ATPase C chain family. In terms of assembly, F-type ATPases have 2 components, F(1) - the catalytic core - and F(0) - the membrane proton channel. F(1) has five subunits: alpha(3), beta(3), gamma(1), delta(1), epsilon(1). F(0) has four main subunits: a(1), b(1), b'(1) and c(10-14). The alpha and beta chains form an alternating ring which encloses part of the gamma chain. F(1) is attached to F(0) by a central stalk formed by the gamma and epsilon chains, while a peripheral stalk is formed by the delta, b and b' chains.

The protein resides in the plastid. Its subcellular location is the chloroplast thylakoid membrane. In terms of biological role, f(1)F(0) ATP synthase produces ATP from ADP in the presence of a proton or sodium gradient. F-type ATPases consist of two structural domains, F(1) containing the extramembraneous catalytic core and F(0) containing the membrane proton channel, linked together by a central stalk and a peripheral stalk. During catalysis, ATP synthesis in the catalytic domain of F(1) is coupled via a rotary mechanism of the central stalk subunits to proton translocation. Functionally, key component of the F(0) channel; it plays a direct role in translocation across the membrane. A homomeric c-ring of between 10-14 subunits forms the central stalk rotor element with the F(1) delta and epsilon subunits. In Zygnema circumcarinatum (Green alga), this protein is ATP synthase subunit c, chloroplastic.